Reading from the N-terminus, the 101-residue chain is NADH-quinone oxidoreductase subunit K (101 aa).

Transmembrane regions (helical) follow at residues 5-25, 30-50, and 61-81; these read LTHY…GIIL, IVIL…LVAF, and VLVF…LALI.

Belongs to the complex I subunit 4L family. As to quaternary structure, NDH-1 is composed of 14 different subunits. Subunits NuoA, H, J, K, L, M, N constitute the membrane sector of the complex.

It is found in the cell inner membrane. It catalyses the reaction a quinone + NADH + 5 H(+)(in) = a quinol + NAD(+) + 4 H(+)(out). NDH-1 shuttles electrons from NADH, via FMN and iron-sulfur (Fe-S) centers, to quinones in the respiratory chain. The immediate electron acceptor for the enzyme in this species is believed to be ubiquinone. Couples the redox reaction to proton translocation (for every two electrons transferred, four hydrogen ions are translocated across the cytoplasmic membrane), and thus conserves the redox energy in a proton gradient. The sequence is that of NADH-quinone oxidoreductase subunit K from Methylacidiphilum infernorum (isolate V4) (Methylokorus infernorum (strain V4)).